Here is a 315-residue protein sequence, read N- to C-terminus: O-antigen chain rhamnosyltransferase WbaN (315 aa).

It belongs to the glycosyltransferase 2 family.

It carries out the reaction alpha-D-galactosyl-di-trans,octa-cis-undecaprenyl diphosphate + dTDP-beta-L-rhamnose = alpha-L-rhamnosyl-(1-&gt;3)-alpha-D-galactosyl-1-diphospho-di-trans,octa-cis-undecaprenol + dTDP + H(+). It functions in the pathway bacterial outer membrane biogenesis; LPS O-antigen biosynthesis. Rhamnosyltransferase involved in the biosynthesis of the repeat unit of the lipopolysaccharide (LPS) O-antigen region. Catalyzes the addition of a rhamnose to the galactosyl-undecaprenyl diphosphate intermediate. The chain is O-antigen chain rhamnosyltransferase WbaN from Salmonella anatum.